Here is an 81-residue protein sequence, read N- to C-terminus: Putative defensin-like protein 265 (81 aa).

Residues 1–26 (MEKTVSRKVVVLAILLSLSCLCIAKA) form the signal peptide. 3 disulfide bridges follow: cysteine 48–cysteine 66, cysteine 54–cysteine 71, and cysteine 58–cysteine 73.

Belongs to the DEFL family.

Its subcellular location is the secreted. The chain is Putative defensin-like protein 265 from Arabidopsis thaliana (Mouse-ear cress).